A 315-amino-acid polypeptide reads, in one-letter code: Prephenate dehydratase (315 aa).

In terms of domain architecture, Prephenate dehydratase spans 3–189 (RIAYLGPEGT…ARTRFLLIGV (187 aa)). The region spanning 203–280 (SVVLRIANVP…ADVRYLGSWP (78 aa)) is the ACT domain.

As to quaternary structure, homodimer.

The catalysed reaction is prephenate + H(+) = 3-phenylpyruvate + CO2 + H2O. The protein operates within amino-acid biosynthesis; L-phenylalanine biosynthesis; phenylpyruvate from prephenate: step 1/1. The polypeptide is Prephenate dehydratase (pheA) (Mycobacterium marinum (strain ATCC BAA-535 / M)).